Reading from the N-terminus, the 1130-residue chain is 3-hydroxy-3-methylglutaryl-coenzyme A reductase 1 (1130 aa).

Residues 1–46 (MATSLITRKLRSAEATNDVEPGWLKRQVTGVLQSISSHACQHPIHT) lie on the Cytoplasmic side of the membrane. A helical membrane pass occupies residues 47 to 67 (IVVIALLASTTYVGLLEGSLF). Residues 68 to 242 (DSVRNSRNIA…DLIKHAETID (175 aa)) lie on the Lumenal side of the membrane. N148 is a glycosylation site (N-linked (GlcNAc...) asparagine). Positions 242-415 (DIVIMTLGYL…FTFYTTILCI (174 aa)) constitute an SSD domain. A helical transmembrane segment spans residues 243–263 (IVIMTLGYLSMHLSFVSLFFS). At 264-270 (MRRLGSN) the chain is on the cytoplasmic side. Residues 271–291 (FWLAATVLFSGVFAFLFGLLV) traverse the membrane as a helical segment. Topologically, residues 292-296 (TTKLG) are lumenal. Residues 297-317 (VPINVLLLSEGLPFLVVTIGF) traverse the membrane as a helical segment. The Cytoplasmic portion of the chain corresponds to 318–366 (EKPIILTRAVLTAAADNRGRAGQASSSTTKSIQDSIQTAIKEQGFEIIR). A helical transmembrane segment spans residues 367-387 (DYCIEIAILIAGAASGVQGGL). Residues 388–389 (RQ) lie on the Lumenal side of the membrane. Residues 390 to 410 (FCFLAAWILFFDCVLLFTFYT) traverse the membrane as a helical segment. The Cytoplasmic portion of the chain corresponds to 411 to 476 (TILCIKLEIN…RKLRSSSVRR (66 aa)). The helical transmembrane segment at 477-497 (FKILMVGGFVLVNVVNLSTIP) threads the bilayer. At 498–601 (FRDSSQGAGL…ESLLKSIEDP (104 aa)) the chain is on the lumenal side. The helical transmembrane segment at 602-622 (IISKWIIAALTLSIILNGYLF) threads the bilayer. Residues 623 to 1130 (NAARWSIKEP…ARGLTMSSSE (508 aa)) lie on the Cytoplasmic side of the membrane. E792 functions as the Charge relay system in the catalytic mechanism. 798-804 (STSRGAK) lines the CoA pocket. NADP(+) contacts are provided by residues 859–861 (SRF) and 886–894 (DAMGMNMIS). The Charge relay system role is filled by K926. Position 955-957 (955-957 (VLK)) interacts with CoA. D1002 serves as the catalytic Charge relay system. 1097-1098 (AH) lines the CoA pocket. The active-site Proton donor is the H1098. 1102 to 1103 (NR) serves as a coordination point for NADP(+). The span at 1103–1122 (RSAATTRTSTPVSAAVSAAR) shows a compositional bias: low complexity. Positions 1103–1130 (RSAATTRTSTPVSAAVSAARGLTMSSSE) are disordered.

The protein belongs to the HMG-CoA reductase family.

The protein localises to the endoplasmic reticulum membrane. The enzyme catalyses (R)-mevalonate + 2 NADP(+) + CoA = (3S)-3-hydroxy-3-methylglutaryl-CoA + 2 NADPH + 2 H(+). It functions in the pathway metabolic intermediate biosynthesis; (R)-mevalonate biosynthesis; (R)-mevalonate from acetyl-CoA: step 3/3. Its function is as follows. HMG-CoA reductase; part of the first module of ergosterol biosynthesis pathway that includes the early steps of the pathway, conserved across all eukaryotes, and which results in the formation of mevalonate from acetyl-coenzyme A (acetyl-CoA). Hmg1 and hmg2 catalyze the reduction of hydroxymethylglutaryl-CoA (HMG-CoA) to mevalonate. The first module starts with the action of the cytosolic acetyl-CoA acetyltransferase erg10B that catalyzes the formation of acetoacetyl-CoA. The hydroxymethylglutaryl-CoA synthases erg13A and erg13B then condense acetyl-CoA with acetoacetyl-CoA to form HMG-CoA. The rate-limiting step of the early module is the reduction to mevalonate by the 3-hydroxy-3-methylglutaryl-coenzyme A (HMG-CoA) reductases hmg1 and hmg2. Mevalonate is also a precursor for the extracellular siderophore triacetylfusarinine C (TAFC). This is 3-hydroxy-3-methylglutaryl-coenzyme A reductase 1 from Aspergillus fumigatus (strain ATCC MYA-4609 / CBS 101355 / FGSC A1100 / Af293) (Neosartorya fumigata).